The primary structure comprises 377 residues: Histidinol-phosphate aminotransferase (377 aa).

Lys232 carries the N6-(pyridoxal phosphate)lysine modification.

The protein belongs to the class-II pyridoxal-phosphate-dependent aminotransferase family. Histidinol-phosphate aminotransferase subfamily. Homodimer. Requires pyridoxal 5'-phosphate as cofactor.

It catalyses the reaction L-histidinol phosphate + 2-oxoglutarate = 3-(imidazol-4-yl)-2-oxopropyl phosphate + L-glutamate. It participates in amino-acid biosynthesis; L-histidine biosynthesis; L-histidine from 5-phospho-alpha-D-ribose 1-diphosphate: step 7/9. This is Histidinol-phosphate aminotransferase from Mycobacterium sp. (strain JLS).